The following is an 83-amino-acid chain: Exodeoxyribonuclease 7 small subunit (83 aa).

This sequence belongs to the XseB family. In terms of assembly, heterooligomer composed of large and small subunits.

It is found in the cytoplasm. It carries out the reaction Exonucleolytic cleavage in either 5'- to 3'- or 3'- to 5'-direction to yield nucleoside 5'-phosphates.. In terms of biological role, bidirectionally degrades single-stranded DNA into large acid-insoluble oligonucleotides, which are then degraded further into small acid-soluble oligonucleotides. This is Exodeoxyribonuclease 7 small subunit from Rhizobium meliloti (strain 1021) (Ensifer meliloti).